A 280-amino-acid polypeptide reads, in one-letter code: 4-diphosphocytidyl-2-C-methyl-D-erythritol kinase (280 aa).

Residue Lys-8 is part of the active site. 91 to 101 is a binding site for ATP; sequence PVAAGLAGGST. The active site involves Asp-133.

Belongs to the GHMP kinase family. IspE subfamily.

It catalyses the reaction 4-CDP-2-C-methyl-D-erythritol + ATP = 4-CDP-2-C-methyl-D-erythritol 2-phosphate + ADP + H(+). It functions in the pathway isoprenoid biosynthesis; isopentenyl diphosphate biosynthesis via DXP pathway; isopentenyl diphosphate from 1-deoxy-D-xylulose 5-phosphate: step 3/6. Catalyzes the phosphorylation of the position 2 hydroxy group of 4-diphosphocytidyl-2C-methyl-D-erythritol. The polypeptide is 4-diphosphocytidyl-2-C-methyl-D-erythritol kinase (Clostridium botulinum (strain Loch Maree / Type A3)).